The following is a 640-amino-acid chain: Serine/threonine-protein kinase ELM1 (640 aa).

The segment at 27–47 is disordered; it reads ELDSPPITPTSQTSSFGSSFS. Positions 35–47 are enriched in low complexity; it reads PTSQTSSFGSSFS. A Protein kinase domain is found at 88–420; that stretch reads YTLGVSAGSG…PIDSRNHSQI (333 aa). ATP contacts are provided by residues 94 to 102 and K117; that span reads AGSGQFGYV. S152 is subject to Phosphoserine. The active-site Proton acceptor is the D259. S516 and S519 each carry phosphoserine. Residues 520 to 529 show a composition bias toward polar residues; sequence LPNLTVNNDK. Disordered stretches follow at residues 520-547 and 562-587; these read LPNLTVNNDKQNSDMKTDRSESSSHSSL and SPKENGNRTHINCSQDKPSSPLMDRT. Over residues 530–541 the composition is skewed to basic and acidic residues; sequence QNSDMKTDRSES. Over residues 569–579 the composition is skewed to polar residues; that stretch reads RTHINCSQDKP.

This sequence belongs to the protein kinase superfamily. Ser/Thr protein kinase family. The cofactor is Mg(2+).

It catalyses the reaction L-seryl-[protein] + ATP = O-phospho-L-seryl-[protein] + ADP + H(+). It carries out the reaction L-threonyl-[protein] + ATP = O-phospho-L-threonyl-[protein] + ADP + H(+). Important role in G1 events required for bud emergence and septin organization. Coordinates cell growth and cell division at G2/M, essential for efficient cytokinesis and for regulation of SWE1. This Saccharomyces cerevisiae (strain ATCC 204508 / S288c) (Baker's yeast) protein is Serine/threonine-protein kinase ELM1 (ELM1).